The following is a 156-amino-acid chain: 6,7-dimethyl-8-ribityllumazine synthase (156 aa).

Residues F22, 57–59, and 81–83 contribute to the 5-amino-6-(D-ribitylamino)uracil site; these read AYE and TVI. 86 to 87 provides a ligand contact to (2S)-2-hydroxy-3-oxobutyl phosphate; sequence GT. H89 serves as the catalytic Proton donor. F114 contributes to the 5-amino-6-(D-ribitylamino)uracil binding site. A (2S)-2-hydroxy-3-oxobutyl phosphate-binding site is contributed by R128.

The protein belongs to the DMRL synthase family. As to quaternary structure, forms an icosahedral capsid composed of 60 subunits, arranged as a dodecamer of pentamers.

It carries out the reaction (2S)-2-hydroxy-3-oxobutyl phosphate + 5-amino-6-(D-ribitylamino)uracil = 6,7-dimethyl-8-(1-D-ribityl)lumazine + phosphate + 2 H2O + H(+). The protein operates within cofactor biosynthesis; riboflavin biosynthesis; riboflavin from 2-hydroxy-3-oxobutyl phosphate and 5-amino-6-(D-ribitylamino)uracil: step 1/2. Functionally, catalyzes the formation of 6,7-dimethyl-8-ribityllumazine by condensation of 5-amino-6-(D-ribitylamino)uracil with 3,4-dihydroxy-2-butanone 4-phosphate. This is the penultimate step in the biosynthesis of riboflavin. The protein is 6,7-dimethyl-8-ribityllumazine synthase of Yersinia enterocolitica serotype O:8 / biotype 1B (strain NCTC 13174 / 8081).